The sequence spans 747 residues: RNA polymerase II assembly factor rtp1 (747 aa).

HEAT repeat units lie at residues 37–75 (NYFL…LLGV), 103–141 (QIYN…NCHE), 320–358 (DIIR…VCGT), 381–418 (SQLA…NVDS), 459–485 (EENE…LDLE), 486–523 (NPIS…SKDD), and 557–594 (INPV…KYDD).

Belongs to the Tango6 family. Interacts with RNA polymerase II subunits. Interacts with nuclear pore complex subunits.

The protein resides in the cytoplasm. It is found in the nucleus. Its function is as follows. Required for the cytoplasmic assembly and the nuclear import of RNA polymerase II. The sequence is that of RNA polymerase II assembly factor rtp1 from Schizosaccharomyces pombe (strain 972 / ATCC 24843) (Fission yeast).